Consider the following 153-residue polypeptide: Nucleoside diphosphate kinase (153 aa).

6 residues coordinate ATP: Lys13, Phe61, Arg89, Thr95, Arg106, and Asn116. His119 (pros-phosphohistidine intermediate) is an active-site residue.

This sequence belongs to the NDK family. Requires Mg(2+) as cofactor.

The protein resides in the cytoplasm. Its subcellular location is the cell membrane. It catalyses the reaction a 2'-deoxyribonucleoside 5'-diphosphate + ATP = a 2'-deoxyribonucleoside 5'-triphosphate + ADP. It carries out the reaction a ribonucleoside 5'-diphosphate + ATP = a ribonucleoside 5'-triphosphate + ADP. Major role in the synthesis of nucleoside triphosphates other than ATP. The ATP gamma phosphate is transferred to the NDP beta phosphate via a ping-pong mechanism, using a phosphorylated active-site intermediate. The sequence is that of Nucleoside diphosphate kinase from Gallus gallus (Chicken).